The following is a 163-amino-acid chain: MPSFDIVSEITMHEVRNAVENANRVLSTRYDFRGVEAVIELNEKNESIKLTTESDFQLEQLIEILIGSCVKRGIEHNSLDIPSDAEHHGKLYSKEIKLKQGIETEMAKKITKLIKDSKIKVQTQIQGEQVRVTGKSRDDLQAAIQLVKGAELGQPFQFNNFRD.

It belongs to the YajQ family.

Functionally, nucleotide-binding protein. This is Nucleotide-binding protein APJL_1242 from Actinobacillus pleuropneumoniae serotype 3 (strain JL03).